The primary structure comprises 276 residues: Thymidylate synthase (276 aa).

Residue arginine 26 coordinates dUMP. Residue histidine 56 coordinates (6R)-5,10-methylene-5,6,7,8-tetrahydrofolate. 131 to 132 (RR) is a dUMP binding site. The active-site Nucleophile is the cysteine 151. Residues 178 to 181 (RSAD), asparagine 189, and 219 to 221 (HIY) contribute to the dUMP site. Aspartate 181 contributes to the (6R)-5,10-methylene-5,6,7,8-tetrahydrofolate binding site. (6R)-5,10-methylene-5,6,7,8-tetrahydrofolate is bound at residue alanine 275.

Belongs to the thymidylate synthase family. Bacterial-type ThyA subfamily. In terms of assembly, homodimer.

It localises to the cytoplasm. The catalysed reaction is dUMP + (6R)-5,10-methylene-5,6,7,8-tetrahydrofolate = 7,8-dihydrofolate + dTMP. The protein operates within pyrimidine metabolism; dTTP biosynthesis. Catalyzes the reductive methylation of 2'-deoxyuridine-5'-monophosphate (dUMP) to 2'-deoxythymidine-5'-monophosphate (dTMP) while utilizing 5,10-methylenetetrahydrofolate (mTHF) as the methyl donor and reductant in the reaction, yielding dihydrofolate (DHF) as a by-product. This enzymatic reaction provides an intracellular de novo source of dTMP, an essential precursor for DNA biosynthesis. This chain is Thymidylate synthase, found in Polaromonas naphthalenivorans (strain CJ2).